The sequence spans 1058 residues: Carbamoyl phosphate synthase large chain (1058 aa).

Residues methionine 1–glutamate 401 are carboxyphosphate synthetic domain. 12 residues coordinate ATP: arginine 129, arginine 169, glycine 175, glycine 176, arginine 208, isoleucine 210, glutamate 215, glycine 241, isoleucine 242, histidine 243, glutamine 284, and glutamate 298. Residues lysine 133–valine 327 form the ATP-grasp 1 domain. Positions 284, 298, and 300 each coordinate Mg(2+). Mn(2+) contacts are provided by glutamine 284, glutamate 298, and asparagine 300. The oligomerization domain stretch occupies residues isoleucine 402–serine 546. The tract at residues isoleucine 547–tyrosine 929 is carbamoyl phosphate synthetic domain. The ATP-grasp 2 domain occupies glutamate 671–leucine 861. Residues arginine 707, serine 746, isoleucine 748, glutamate 752, glycine 777, valine 778, histidine 779, serine 780, glutamine 820, and glutamate 832 each contribute to the ATP site. Mg(2+) contacts are provided by glutamine 820, glutamate 832, and asparagine 834. The Mn(2+) site is built by glutamine 820, glutamate 832, and asparagine 834. The MGS-like domain occupies leucine 930 to isoleucine 1058. Residues leucine 930–isoleucine 1058 are allosteric domain.

The protein belongs to the CarB family. Composed of two chains; the small (or glutamine) chain promotes the hydrolysis of glutamine to ammonia, which is used by the large (or ammonia) chain to synthesize carbamoyl phosphate. Tetramer of heterodimers (alpha,beta)4. Requires Mg(2+) as cofactor. It depends on Mn(2+) as a cofactor.

It catalyses the reaction hydrogencarbonate + L-glutamine + 2 ATP + H2O = carbamoyl phosphate + L-glutamate + 2 ADP + phosphate + 2 H(+). It carries out the reaction hydrogencarbonate + NH4(+) + 2 ATP = carbamoyl phosphate + 2 ADP + phosphate + 2 H(+). The protein operates within amino-acid biosynthesis; L-arginine biosynthesis; carbamoyl phosphate from bicarbonate: step 1/1. Its pathway is pyrimidine metabolism; UMP biosynthesis via de novo pathway; (S)-dihydroorotate from bicarbonate: step 1/3. Functionally, large subunit of the glutamine-dependent carbamoyl phosphate synthetase (CPSase). CPSase catalyzes the formation of carbamoyl phosphate from the ammonia moiety of glutamine, carbonate, and phosphate donated by ATP, constituting the first step of 2 biosynthetic pathways, one leading to arginine and/or urea and the other to pyrimidine nucleotides. The large subunit (synthetase) binds the substrates ammonia (free or transferred from glutamine from the small subunit), hydrogencarbonate and ATP and carries out an ATP-coupled ligase reaction, activating hydrogencarbonate by forming carboxy phosphate which reacts with ammonia to form carbamoyl phosphate. The protein is Carbamoyl phosphate synthase large chain of Streptococcus pneumoniae (strain JJA).